The chain runs to 518 residues: Chromosomal replication initiator protein DnaA (518 aa).

The interval 1-76 (METDGGDFPS…RALSEAYGSP (76 aa)) is domain I, interacts with DnaA modulators. The tract at residues 76 to 176 (PIRLAVTVDP…RRPTTRIENS (101 aa)) is domain II. Residues 91–174 (LTPERTGEHS…QPRRPTTRIE (84 aa)) form a disordered region. The span at 124–135 (DGLHLDERRSGS) shows a compositional bias: basic and acidic residues. Residues 136–147 (LEEDSPLDDSDP) are compositionally biased toward acidic residues. Residues 177–393 (RLNPKYIFET…GALIRVTAFA (217 aa)) form a domain III, AAA+ region region. ATP-binding residues include Gly-221, Gly-223, Lys-224, and Thr-225. The domain IV, binds dsDNA stretch occupies residues 394–518 (SLNRQPVDMQ…TNRIKKQSGA (125 aa)).

This sequence belongs to the DnaA family. In terms of assembly, oligomerizes as a right-handed, spiral filament on DNA at oriC.

The protein resides in the cytoplasm. Plays an essential role in the initiation and regulation of chromosomal replication. ATP-DnaA binds to the origin of replication (oriC) to initiate formation of the DNA replication initiation complex once per cell cycle. Binds the DnaA box (a 9 base pair repeat at the origin) and separates the double-stranded (ds)DNA. Forms a right-handed helical filament on oriC DNA; dsDNA binds to the exterior of the filament while single-stranded (ss)DNA is stabiized in the filament's interior. The ATP-DnaA-oriC complex binds and stabilizes one strand of the AT-rich DNA unwinding element (DUE), permitting loading of DNA polymerase. After initiation quickly degrades to an ADP-DnaA complex that is not apt for DNA replication. Binds acidic phospholipids. The sequence is that of Chromosomal replication initiator protein DnaA from Kineococcus radiotolerans (strain ATCC BAA-149 / DSM 14245 / SRS30216).